The primary structure comprises 337 residues: Pantothenate synthetase (337 aa).

31-38 (MGALHEGH) is a binding site for ATP. H38 (proton donor) is an active-site residue. (R)-pantoate is bound at residue Q65. Q65 is a beta-alanine binding site. An ATP-binding site is contributed by 152–155 (GQKD). Q158 serves as a coordination point for (R)-pantoate. ATP is bound by residues V181 and 189 to 192 (LSSR).

This sequence belongs to the pantothenate synthetase family. Homodimer.

The protein localises to the cytoplasm. The enzyme catalyses (R)-pantoate + beta-alanine + ATP = (R)-pantothenate + AMP + diphosphate + H(+). It participates in cofactor biosynthesis; (R)-pantothenate biosynthesis; (R)-pantothenate from (R)-pantoate and beta-alanine: step 1/1. Functionally, catalyzes the condensation of pantoate with beta-alanine in an ATP-dependent reaction via a pantoyl-adenylate intermediate. The protein is Pantothenate synthetase of Streptomyces coelicolor (strain ATCC BAA-471 / A3(2) / M145).